Reading from the N-terminus, the 695-residue chain is MSHLWCWLFLVLCLACLVLSIEAKDSDGDGLLDVDEINVYFTDPYNADSDQDGLTDGLEVNRHQTHPQDKDTDDDSIGDGVEVNNLGTNPKDPDSDDDGLTDGAEVNLYRTDPLDADSTTTGCPMGGGAEVRHRPQNGDTDDDGLTDGAEVNVHRTNPQDGDSDDDGLSDGAEVNTYHSNPKDGDSDDDGVSDGAEVNPKLKDSDGDGLTDEEEIKLYRTDPFCADSDFDGLLDGEEVKVHKTNPLDGDSDDDGLGDGAEVTHFNTNPLDADSDNDGLDDGEEINVHGTDPEDPDSDNDGLNDGDEVNVYNTDPEEDDSDEDGVCDGAEVNVHHTNPKDEDSDNDGIPDGAEINTHKTDPNDEDSDDDGIADGAEVTLTDSDGDGLPDEDEVALYNTNPANADSDYDGLTDGAEVKRYQSNPLDKDTDDDGLGDGVEVTVGTDPHDATVTTTGSRTAVEINVHGSDPNDEDTDDDGLTDGAEVNLHRTDPEDADTDDDGLTDGAEVNTYRTNPKLADSDGDGLSDGAEVNTHKSDPNDGDSDDDGVPDAAEAKVKDSDGDGLSDTDEVRFRTNPKLADTDFDGLTDGAEILKHKTDPRNRDTDGDGVADGLEVNTYGSDPKDADTDDDGLTDGAEINVHDTNPTDADSDDDGLSDGAEVMTYHTNAKDGDSDDDGKADGAEVSASTDPWRSDHSV.

Residues 1 to 20 (MSHLWCWLFLVLCLACLVLS) constitute a signal peptide (or 23). TSP type-3 repeat units lie at residues 24 to 38 (KDSD…DEIN), 47 to 56 (ADSDQDGLTD), 70 to 82 (KDTD…DGVE), 184 to 196 (GDSD…DGAE), 202 to 214 (KDSD…DEEE), and 248 to 260 (GDSD…DGAE). The tract at residues 45–695 (YNADSDQDGL…TDPWRSDHSV (651 aa)) is disordered. The segment covering 59–70 (EVNRHQTHPQDK) has biased composition (basic and acidic residues). Composition is skewed to acidic residues over residues 271 to 283 (ADSD…DGEE), 291 to 306 (PEDP…DGDE), and 313 to 324 (DPEEDDSDEDGV). 15 TSP type-3 repeats span residues 294–308 (PDSD…DEVN), 317–329 (DDSD…DGAE), 340–352 (EDSD…DGAE), 363–375 (EDSD…DGAE), 379–393 (TDSD…DEVA), 402–414 (ADSD…DGAE), 425–437 (KDTD…DGVE), 470–482 (EDTD…DGAE), 493–505 (ADTD…DGAE), 516–528 (ADSD…DGAE), 539–551 (GDSD…DAAE), 555–569 (KDSD…DEVR), 600–609 (RDTDGDGVAD), 623–635 (ADTD…DGAE), and 646–658 (ADSD…DGAE). Composition is skewed to acidic residues over residues 361-370 (NDEDSDDDGI) and 381-392 (SDGDGLPDEDEV). Acidic residues-rich tracts occupy residues 467 to 477 (PNDEDTDDDGL) and 491 to 500 (EDADTDDDGL). Residues 537 to 546 (NDGDSDDDGV) show a composition bias toward acidic residues. Over residues 589–603 (EILKHKTDPRNRDTD) the composition is skewed to basic and acidic residues. Positions 665 to 679 (NAKDGDSDDDGKADG) are enriched in basic and acidic residues.

It localises to the secreted. The protein localises to the endoplasmic reticulum. May function as a calcium-binding protein. The polypeptide is Calcium-binding acidic-repeat protein (Euglena gracilis).